Consider the following 400-residue polypeptide: Formate-dependent phosphoribosylglycinamide formyltransferase (400 aa).

N(1)-(5-phospho-beta-D-ribosyl)glycinamide contacts are provided by residues 22-23 and Glu-82; that span reads EL. ATP contacts are provided by residues Arg-115, Lys-156, 161-166, 196-199, and Glu-204; these read SSGKGQ and EGFI. The ATP-grasp domain maps to 120-309; that stretch reads RLAAETLGLP…EFALHARAIL (190 aa). Mg(2+) contacts are provided by Glu-268 and Glu-280. N(1)-(5-phospho-beta-D-ribosyl)glycinamide is bound by residues Asp-287, Lys-361, and 368-369; that span reads RR.

It belongs to the PurK/PurT family. Homodimer.

It catalyses the reaction N(1)-(5-phospho-beta-D-ribosyl)glycinamide + formate + ATP = N(2)-formyl-N(1)-(5-phospho-beta-D-ribosyl)glycinamide + ADP + phosphate + H(+). Its pathway is purine metabolism; IMP biosynthesis via de novo pathway; N(2)-formyl-N(1)-(5-phospho-D-ribosyl)glycinamide from N(1)-(5-phospho-D-ribosyl)glycinamide (formate route): step 1/1. Functionally, involved in the de novo purine biosynthesis. Catalyzes the transfer of formate to 5-phospho-ribosyl-glycinamide (GAR), producing 5-phospho-ribosyl-N-formylglycinamide (FGAR). Formate is provided by PurU via hydrolysis of 10-formyl-tetrahydrofolate. The polypeptide is Formate-dependent phosphoribosylglycinamide formyltransferase (Xanthomonas axonopodis pv. citri (strain 306)).